Consider the following 752-residue polypeptide: Double zinc ribbon and ankyrin repeat-containing protein 1 (752 aa).

2 consecutive DZANK-type zinc fingers follow at residues 210-270 and 338-386; these read CPKC…VVCE and CSKC…GGCG. Residues 448–469 are compositionally biased toward basic and acidic residues; the sequence is KKRSQQREAELSRQEQMRDRKP. 2 disordered regions span residues 448-471 and 536-614; these read KKRSQQREAELSRQEQMRDRKPLL and PPEE…VGPE. Over residues 536 to 554 the composition is skewed to low complexity; that stretch reads PPEESRSSSAGQRSRSVTS. Over residues 555-580 the composition is skewed to polar residues; sequence ESQNLSSVTEGRNSASPENNINTTGS. Residues 600 to 614 are compositionally biased toward basic and acidic residues; that stretch reads PESKDSLLLKEVGPE. 3 ANK repeats span residues 638 to 667, 672 to 703, and 707 to 737; these read DGRPALVAAVLNGHHDVIPVLVQREADVNQ, LKNTALHEAAALGDEGLKSVEILLGCNASIRK, and RGQTPYDIAVAAGSSSVLSLMAAHLGQGLLL.

Its subcellular location is the cytoplasm. The protein localises to the cytoskeleton. It localises to the microtubule organizing center. The protein resides in the centrosome. It is found in the cilium basal body. Its function is as follows. Required for the intracellular transport of organelles and vesicles, and is essential for the photoreceptor's outer segments formation, maintenance and function. The chain is Double zinc ribbon and ankyrin repeat-containing protein 1 (dzank1) from Danio rerio (Zebrafish).